Here is a 118-residue protein sequence, read N- to C-terminus: Large ribosomal subunit protein bL19 (118 aa).

Belongs to the bacterial ribosomal protein bL19 family.

In terms of biological role, this protein is located at the 30S-50S ribosomal subunit interface and may play a role in the structure and function of the aminoacyl-tRNA binding site. The polypeptide is Large ribosomal subunit protein bL19 (Herpetosiphon aurantiacus (strain ATCC 23779 / DSM 785 / 114-95)).